The sequence spans 437 residues: GTP-binding protein ERG (437 aa).

Over residues 39-50 (QPNLDEPTSINE) the composition is skewed to polar residues. Positions 39–65 (QPNLDEPTSINEDGSSSDSVFDSSQYP) are disordered. Residues 51 to 62 (DGSSSDSVFDSS) show a composition bias toward low complexity. A phosphoserine mark is found at Ser111 and Ser112. The Era-type G domain maps to 152 to 333 (KSLNVGIIGP…LMDQAVKKPW (182 aa)). Residues 160 to 167 (GPPNAGKS) form a G1 region. GTP is bound at residue 160-167 (GPPNAGKS). The interval 186–190 (NTTTH) is G2. Residues 207–210 (DTPG) are G3. GTP contacts are provided by residues 207–211 (DTPGL) and 279–282 (NKVD). A G4 region spans residues 279–282 (NKVD). Residues 309–311 (ISG) form a G5 region. The 77-residue stretch at 361–437 (VHQEIPYGLE…VHLILQVKLK (77 aa)) folds into the KH type-2 domain.

It belongs to the TRAFAC class TrmE-Era-EngA-EngB-Septin-like GTPase superfamily. Era GTPase family.

Its function is as follows. Has a crucial role in plant growth and development, possibly by influencing mitochondrial division. In Arabidopsis thaliana (Mouse-ear cress), this protein is GTP-binding protein ERG (ERG).